The following is a 136-amino-acid chain: Large ribosomal subunit protein uL16 (136 aa).

It belongs to the universal ribosomal protein uL16 family. As to quaternary structure, part of the 50S ribosomal subunit.

Its function is as follows. Binds 23S rRNA and is also seen to make contacts with the A and possibly P site tRNAs. This Aliivibrio salmonicida (strain LFI1238) (Vibrio salmonicida (strain LFI1238)) protein is Large ribosomal subunit protein uL16.